Reading from the N-terminus, the 204-residue chain is MIDIAKEHKVNEQIRVRQIRLIGAEGEQIGIIDTRDALAMAREKGLDLVMVSPQAVPPVCRLLDYGRFRYEQQQNEKENRKRARAQEVKAIKFRVKIDDHDFNTKTGHVRRFLEEGHKVKVTIMFRGRERTHPELGERILHRVAETLADIGAPEGMPSMMGMDMNMIMVPKAAPKRDSGRSESAQEAPTARSAEASRPEAPANA.

The segment at 169–204 (VPKAAPKRDSGRSESAQEAPTARSAEASRPEAPANA) is disordered.

The protein belongs to the IF-3 family. Monomer.

The protein resides in the cytoplasm. IF-3 binds to the 30S ribosomal subunit and shifts the equilibrium between 70S ribosomes and their 50S and 30S subunits in favor of the free subunits, thus enhancing the availability of 30S subunits on which protein synthesis initiation begins. In Deinococcus geothermalis (strain DSM 11300 / CIP 105573 / AG-3a), this protein is Translation initiation factor IF-3.